The chain runs to 101 residues: Movement protein (101 aa).

Residues 30 to 50 form a helical membrane-spanning segment; the sequence is EVAILSFVALICIYLLYLWVL.

This sequence belongs to the mastrevirus movement protein family. As to quaternary structure, interacts with the capsid protein (CP). Part of a MP-CP-viral DNA complex.

Its subcellular location is the host membrane. In terms of biological role, involved in the viral transport within, and between cells. The chain is Movement protein from Maize streak virus genotype D (isolate Raw) (MSV).